The sequence spans 422 residues: 5-hydroxytryptamine receptor 1A (422 aa).

The disordered stretch occupies residues 1–23; the sequence is MDVLSPGQGNNTTSPPAPFETGG. The Extracellular segment spans residues 1-38; the sequence is MDVLSPGQGNNTTSPPAPFETGGNTTGISDVTVSYQVI. Residues asparagine 10, asparagine 11, and asparagine 24 are each glycosylated (N-linked (GlcNAc...) asparagine). Residues 39–59 form a helical membrane-spanning segment; that stretch reads TSLLLGTLIFCAVLGNACVVA. Over 60–73 the chain is Cytoplasmic; sequence AIALERSLQNVANY. A helical membrane pass occupies residues 74–98; sequence LIGSLAVTDLMVSVLVLPMAALYQV. The Extracellular segment spans residues 99–107; that stretch reads LNKWTLGQV. The helical transmembrane segment at 108-132 threads the bilayer; it reads TCDLFIALDVLCCTSSILHLCAIAL. Residues cysteine 109 and cysteine 187 are joined by a disulfide bond. Serotonin contacts are provided by aspartate 116 and cysteine 120. The short motif at 133-135 is the DRY motif; important for ligand-induced conformation changes element; that stretch reads DRY. Topologically, residues 133–152 are cytoplasmic; that stretch reads DRYWAITDPIDYVNKRTPRR. Residues 153 to 174 form a helical membrane-spanning segment; it reads AAALISLTWLIGFLISIPPMLG. Topologically, residues 175 to 193 are extracellular; that stretch reads WRTPEDRSDPDACTISKDH. A helical membrane pass occupies residues 194–216; sequence GYTIYSTFGAFYIPLLLMLVLYG. Residues 217 to 346 lie on the Cytoplasmic side of the membrane; it reads RIFRAARFRI…LARERKTVKT (130 aa). Residues 235 to 262 form a disordered region; that stretch reads KTGADTRHGASPAPQPKKSVNGESGSRN. Threonine 314, lysine 345, threonine 346, and glycine 352 together coordinate 1D-myo-inositol 4-phosphate. A helical transmembrane segment spans residues 347–370; the sequence is LGIIMGTFILCWLPFFIVALVLPF. Residues 371–378 lie on the Extracellular side of the membrane; sequence CESSCHMP. Residues 379-403 traverse the membrane as a helical segment; the sequence is TLLGAIINWLGYSNSLLNPVIYAYF. The NPxxY motif; important for ligand-induced conformation changes and signaling signature appears at 396-400; sequence NPVIY. Positions 403, 404, and 405 each coordinate 1D-myo-inositol 4-phosphate. The Cytoplasmic portion of the chain corresponds to 404 to 422; sequence NKDFQNAFKKIIKCKFCRQ.

The protein belongs to the G-protein coupled receptor 1 family. 5-hydroxytryptamine receptor subfamily. HTR1A sub-subfamily. In terms of assembly, heterodimer; heterodimerizes with GPER1. Interacts with YIF1B. Interacts with GPR39 and GALR1. In terms of tissue distribution, detected in lymph nodes, thymus and spleen. Detected in activated T-cells, but not in resting T-cells.

Its subcellular location is the cell membrane. The protein resides in the cell projection. It localises to the dendrite. With respect to regulation, G-protein coupled receptor activity is regulated by lipids: phosphatidylinositol 4-phosphate increases HTR1A-mediated activity. Binding to aripiprazol drug is regulated by cholesterol, which shapes the ligand-binding pocket, determining the specificity for aripiprazol. Activated by IHCH-7179 small molecule: IHCH-7179 acts both as an agonist activator for HTR1A and as an antagonist inhibitor for HTR2A. Activated by SEP-363856 small molecule: IHCH-7179 acts both as an agonist activator for HTR1A and TAAR1. Its function is as follows. G-protein coupled receptor for 5-hydroxytryptamine (serotonin). Also functions as a receptor for various drugs and psychoactive substances. Ligand binding causes a conformation change that triggers signaling via guanine nucleotide-binding proteins (G proteins) and modulates the activity of downstream effectors, such as adenylate cyclase. HTR1A is coupled to G(i)/G(o) G alpha proteins and mediates inhibitory neurotransmission: signaling inhibits adenylate cyclase activity and activates a phosphatidylinositol-calcium second messenger system that regulates the release of Ca(2+) ions from intracellular stores. Beta-arrestin family members regulate signaling by mediating both receptor desensitization and resensitization processes. Plays a role in the regulation of 5-hydroxytryptamine release and in the regulation of dopamine and 5-hydroxytryptamine metabolism. Plays a role in the regulation of dopamine and 5-hydroxytryptamine levels in the brain, and thereby affects neural activity, mood and behavior. Plays a role in the response to anxiogenic stimuli. This chain is 5-hydroxytryptamine receptor 1A, found in Homo sapiens (Human).